The following is a 393-amino-acid chain: Acyl-homoserine-lactone synthase OpaM (393 aa).

Belongs to the LuxM / VanM family.

It catalyses the reaction a fatty acyl-[ACP] + S-adenosyl-L-methionine = an N-acyl-L-homoserine lactone + S-methyl-5'-thioadenosine + holo-[ACP] + H(+). The sequence is that of Acyl-homoserine-lactone synthase OpaM (opaM) from Vibrio parahaemolyticus serotype O3:K6 (strain RIMD 2210633).